The chain runs to 196 residues: Probable thymidylate kinase (196 aa).

7–14 (GIDGSGKS) contributes to the ATP binding site.

The protein belongs to the thymidylate kinase family.

It catalyses the reaction dTMP + ATP = dTDP + ADP. The polypeptide is Probable thymidylate kinase (Natronomonas pharaonis (strain ATCC 35678 / DSM 2160 / CIP 103997 / JCM 8858 / NBRC 14720 / NCIMB 2260 / Gabara) (Halobacterium pharaonis)).